We begin with the raw amino-acid sequence, 227 residues long: Prolactin (227 aa).

A signal peptide spans 1 to 28 (MNIKGSPWKGSLLLLLVSNLLLCQNVAP). A disulfide bridge connects residues C32 and C39. S54 is subject to Phosphoserine. N59 carries N-linked (GlcNAc...) asparagine glycosylation. A phosphoserine mark is found at S62 and S118. Intrachain disulfides connect C86/C202 and C219/C227.

This sequence belongs to the somatotropin/prolactin family. Interacts with PRLR.

The protein localises to the secreted. Functionally, prolactin acts primarily on the mammary gland by promoting lactation. The chain is Prolactin (PRL) from Macaca mulatta (Rhesus macaque).